We begin with the raw amino-acid sequence, 130 residues long: Secreted RxLR effector protein 66 (130 aa).

An N-terminal signal peptide occupies residues 1–21 (MHLRLLMSTVITATLIVSNNA). The short motif at 32 to 62 (RALRGASTVGIAADNLLAAHFSPTLKHKESR) is the RxLR-dEER element. A helical transmembrane segment spans residues 104-124 (GPAIAIFAGVAATFILIDYLI).

Belongs to the RxLR effector family.

The protein resides in the secreted. It localises to the host cytoplasm. Its subcellular location is the host nucleus. It is found in the membrane. Effector that acts as a broad suppressor of cell death to interrupt plant immunity. Inhibits cell death induced by cell death-inducing proteins, including the PAMP elicitor INF1 from P.infestans. This Plasmopara viticola (Downy mildew of grapevine) protein is Secreted RxLR effector protein 66.